We begin with the raw amino-acid sequence, 304 residues long: Putative dihydroorotate dehydrogenase A (fumarate) (304 aa).

FMN contacts are provided by residues Ser-22 and 46–47 (KG). Substrate is bound by residues Lys-46 and 70-74 (NSVGL). FMN contacts are provided by Asn-100 and Asn-128. A substrate-binding site is contributed by Asn-128. Cys-131 (nucleophile) is an active-site residue. FMN is bound by residues Lys-166 and Val-192. 193–194 (NT) is a binding site for substrate. Residues Gly-218, 244 to 245 (GG), and 266 to 267 (GT) contribute to the FMN site.

This sequence belongs to the dihydroorotate dehydrogenase family. Type 1 subfamily. As to quaternary structure, homodimer. It depends on FMN as a cofactor.

Its subcellular location is the cytoplasm. It catalyses the reaction (S)-dihydroorotate + fumarate = orotate + succinate. It participates in pyrimidine metabolism; UMP biosynthesis via de novo pathway. In terms of biological role, catalyzes the conversion of dihydroorotate to orotate with fumarate as the electron acceptor. In Solibacter usitatus (strain Ellin6076), this protein is Putative dihydroorotate dehydrogenase A (fumarate) (pyrD).